The primary structure comprises 488 residues: Protein nucleotidyltransferase YdiU (488 aa).

Positions 91, 93, 94, 114, 126, 127, 177, and 184 each coordinate ATP. Asp-253 (proton acceptor) is an active-site residue. Mg(2+)-binding residues include Asn-254 and Asp-263. An ATP-binding site is contributed by Asp-263.

The protein belongs to the SELO family. Mg(2+) is required as a cofactor. Requires Mn(2+) as cofactor.

The enzyme catalyses L-seryl-[protein] + ATP = 3-O-(5'-adenylyl)-L-seryl-[protein] + diphosphate. It catalyses the reaction L-threonyl-[protein] + ATP = 3-O-(5'-adenylyl)-L-threonyl-[protein] + diphosphate. The catalysed reaction is L-tyrosyl-[protein] + ATP = O-(5'-adenylyl)-L-tyrosyl-[protein] + diphosphate. It carries out the reaction L-histidyl-[protein] + UTP = N(tele)-(5'-uridylyl)-L-histidyl-[protein] + diphosphate. The enzyme catalyses L-seryl-[protein] + UTP = O-(5'-uridylyl)-L-seryl-[protein] + diphosphate. It catalyses the reaction L-tyrosyl-[protein] + UTP = O-(5'-uridylyl)-L-tyrosyl-[protein] + diphosphate. Functionally, nucleotidyltransferase involved in the post-translational modification of proteins. It can catalyze the addition of adenosine monophosphate (AMP) or uridine monophosphate (UMP) to a protein, resulting in modifications known as AMPylation and UMPylation. The chain is Protein nucleotidyltransferase YdiU from Bacillus cereus (strain ATCC 10987 / NRS 248).